The primary structure comprises 175 residues: Transcription factor E (175 aa).

An HTH TFE/IIEalpha-type domain is found at 8–90; the sequence is NDPVIQKYLH…LWTFQYENIP (83 aa).

It belongs to the TFE family. As to quaternary structure, monomer. Interaction with RNA polymerase subunits RpoF and RpoE is necessary for Tfe stimulatory transcription activity. Able to interact with Tbp and RNA polymerase in the absence of DNA promoter. Interacts both with the preinitiation and elongation complexes.

Functionally, transcription factor that plays a role in the activation of archaeal genes transcribed by RNA polymerase. Facilitates transcription initiation by enhancing TATA-box recognition by TATA-box-binding protein (Tbp), and transcription factor B (Tfb) and RNA polymerase recruitment. Not absolutely required for transcription in vitro, but particularly important in cases where Tbp or Tfb function is not optimal. It dynamically alters the nucleic acid-binding properties of RNA polymerases by stabilizing the initiation complex and destabilizing elongation complexes. Seems to translocate with the RNA polymerase following initiation and acts by binding to the non template strand of the transcription bubble in elongation complexes. The sequence is that of Transcription factor E from Natronomonas pharaonis (strain ATCC 35678 / DSM 2160 / CIP 103997 / JCM 8858 / NBRC 14720 / NCIMB 2260 / Gabara) (Halobacterium pharaonis).